Consider the following 248-residue polypeptide: ATP synthase subunit a, chloroplastic (248 aa).

Helical transmembrane passes span 37–57, 96–116, 134–154, 200–220, and 221–241; these read AQVL…AILA, VPFI…GALL, DINT…YAGL, LVVA…MMFL, and GLFT…AYIG.

This sequence belongs to the ATPase A chain family. In terms of assembly, F-type ATPases have 2 components, CF(1) - the catalytic core - and CF(0) - the membrane proton channel. CF(1) has five subunits: alpha(3), beta(3), gamma(1), delta(1), epsilon(1). CF(0) has four main subunits: a, b, b' and c.

The protein resides in the plastid. Its subcellular location is the chloroplast thylakoid membrane. In terms of biological role, key component of the proton channel; it plays a direct role in the translocation of protons across the membrane. In Anthoceros angustus (Hornwort), this protein is ATP synthase subunit a, chloroplastic.